The following is an 80-amino-acid chain: Putative antitoxin VapB44 (80 aa).

Residues 40–68 (NQNPQPAASQEDAFHGFEPLPHRGGAVSN) are disordered.

Possibly the antitoxin component of a type II toxin-antitoxin (TA) system. Its cognate toxin is VapC44 (Potential). This chain is Putative antitoxin VapB44 (vapB44), found in Mycobacterium tuberculosis (strain CDC 1551 / Oshkosh).